The chain runs to 196 residues: Ribosome maturation factor RimP (196 aa).

The disordered stretch occupies residues 163–196 (GLAPSKPTGPAPKRPKPNTNSSSNEPAAKKPRAE).

The protein belongs to the RimP family.

It is found in the cytoplasm. Its function is as follows. Required for maturation of 30S ribosomal subunits. The sequence is that of Ribosome maturation factor RimP from Stenotrophomonas maltophilia (strain K279a).